We begin with the raw amino-acid sequence, 398 residues long: MTHTPSFDLSDIKSTLSTNVLHADDAYALENDVAPPIHISTTYTYPGTPDTLQPFTKLAEEDFPYYARISGNNVDRAEASLSSVLGAPSVVYSSGLAAIYGLLSYLNPKHIAVHKPGFGGYSGTIQIIARINRLTGLETSFIDGKCDAIGEGDVIWLETPLNPLGIAFDIPFYKELAKKKGAILVVDSTFAPPPIQDALVLGADYVVHSATKYLAGHSDVLAGVTASKDRSKILDLKADRAYLGTILHPQQAFLLLRSLRTFPLRIAKHSENGFLVAQHLNKLATDEQFATSLGIDSSLILEVYHNSLQTKEFVAKNLTGGHASCFSVLLKSDTVAKHLCCELKYFHHATSLGSVESLIEWRRMTDSKIDPRLVRLSIGIEDAADLIADLNRVFASLS.

K212 bears the N6-(pyridoxal phosphate)lysine mark.

Belongs to the trans-sulfuration enzymes family. Requires pyridoxal 5'-phosphate as cofactor.

This is an uncharacterized protein from Schizosaccharomyces pombe (strain 972 / ATCC 24843) (Fission yeast).